The sequence spans 281 residues: MASPSILKKYGKYFEYCPLEERMIELAKKGEIADAMLLFEKEKPSEFVYKGDAIEKRLRNIYLSTRLGVKAKINFNDYVIPRDLRWMLDIYESYLNMGENKVFLILGGELRYLIDFFESYLQFKGFYLLVVKEAKDLLRFRNTCHYDAIIFSDSSILEYQNVDELKNLFNSLETTLKVHNRKNSVKVLLSPALPKAIMSSKPYKVLEQFFKEKGIEMEGILPYQLNADDKLLPPHFHNSEMEKSKEYRELESKTKVYIQEFLKKANMNDENEGNDNQKNTN.

Its subcellular location is the plastid. It localises to the chloroplast. This is an uncharacterized protein from Euglena gracilis.